The primary structure comprises 92 residues: Putative protein pog (92 aa).

The sequence is that of Putative protein pog from Acute bee paralysis virus (strain Rothamsted) (ABPV).